Consider the following 287-residue polypeptide: Elongation factor Ts (287 aa).

Residues 81–84 are involved in Mg(2+) ion dislocation from EF-Tu; sequence TDFV.

Belongs to the EF-Ts family.

Its subcellular location is the cytoplasm. Its function is as follows. Associates with the EF-Tu.GDP complex and induces the exchange of GDP to GTP. It remains bound to the aminoacyl-tRNA.EF-Tu.GTP complex up to the GTP hydrolysis stage on the ribosome. The protein is Elongation factor Ts of Nitratidesulfovibrio vulgaris (strain ATCC 29579 / DSM 644 / CCUG 34227 / NCIMB 8303 / VKM B-1760 / Hildenborough) (Desulfovibrio vulgaris).